Reading from the N-terminus, the 90-residue chain is Auxin-responsive protein SAUR23 (90 aa).

This sequence belongs to the ARG7 family.

The protein localises to the cell membrane. Functions as a positive effector of cell expansion through modulation of auxin transport. The polypeptide is Auxin-responsive protein SAUR23 (Arabidopsis thaliana (Mouse-ear cress)).